The sequence spans 602 residues: MDSRVSELFGGCCRPGGGPAVGGTLKARGAGSSSGCGGPKGKKKNGRNRGGKANNPPYLPPEAEDGNIEYKLKLVNPSQYRFEHLVTQMKWRLQEGRGEAVYQIGVEDNGLLVGLAEEEMRASLKTLHRMAEKVGADITVLREREVDYDSDMPRKITEVLVRKVPDNQQFLDLRVAVLGNVDSGKSTLLGVLTQGELDNGRGRARLNLFRHLHEIQSGRTSSISFEILGFNSKGEVVNYSDSRTAEEICESSSKMITFIDLAGHHKYLHTTIFGLTSYCPDCALLLVSANTGIAGTTREHLGLALALKVPFFIVVSKIDLCAKTTVERTVRQLERVLKQPGCHKVPMLVTSEDDAVTAAQQFAQSPNVTPIFTLSSVSGESLDLLKVFLNILPPLTNSKEQEELMQQLTEFQVDEIYTVPEVGTVVGGTLSSGICREGDQLVVGPTDDGCFLELRVCSIQRNRSACRVLRAGQAATLALGDFDRALLRKGMVMVSPEMNPTICSVFEAEIVLLFHATTFRRGFQVTVHVGNVRQTAVVEKIHAKDKLRTGEKAVVRFRFLKHPEYLKVGAKLLFREGVTKGIGHVTDVQAITAGEAQANMGF.

The interval 16–64 (GGGPAVGGTLKARGAGSSSGCGGPKGKKKNGRNRGGKANNPPYLPPEAE) is disordered. Over residues 40-50 (KGKKKNGRNRG) the composition is skewed to basic residues. In terms of domain architecture, tr-type G spans 170–398 (FLDLRVAVLG…LNILPPLTNS (229 aa)). GTP contacts are provided by residues 179 to 186 (GNVDSGKS), 260 to 264 (DLAGH), and 316 to 319 (SKID).

This sequence belongs to the TRAFAC class translation factor GTPase superfamily. Classic translation factor GTPase family. GTPBP1 subfamily. Predominantly expressed in thymus, spleen, and testis. Expressed at lower levels in brain, lung, kidney, and ovary.

The protein is GTP-binding protein 2 of Homo sapiens (Human).